The sequence spans 156 residues: Small ribosomal subunit protein uS7 (156 aa).

This sequence belongs to the universal ribosomal protein uS7 family. Part of the 30S ribosomal subunit. Contacts proteins S9 and S11.

In terms of biological role, one of the primary rRNA binding proteins, it binds directly to 16S rRNA where it nucleates assembly of the head domain of the 30S subunit. Is located at the subunit interface close to the decoding center, probably blocks exit of the E-site tRNA. This chain is Small ribosomal subunit protein uS7, found in Saccharophagus degradans (strain 2-40 / ATCC 43961 / DSM 17024).